Consider the following 124-residue polypeptide: MARILGVDIPNNKRVVISLTYIFGIGKSRSQEILSKAKIDENKKVSALSEEELATIRKIASEYVIEGDLRREVAMNIKRLMEIGSYRGIRHRRNLPVRGQRTKCNARTRKGPRKTVANKKIETK.

Over residues 103-117 (KCNARTRKGPRKTVA) the composition is skewed to basic residues. Residues 103–124 (KCNARTRKGPRKTVANKKIETK) are disordered.

Belongs to the universal ribosomal protein uS13 family. Part of the 30S ribosomal subunit. Forms a loose heterodimer with protein S19. Forms two bridges to the 50S subunit in the 70S ribosome.

Its function is as follows. Located at the top of the head of the 30S subunit, it contacts several helices of the 16S rRNA. In the 70S ribosome it contacts the 23S rRNA (bridge B1a) and protein L5 of the 50S subunit (bridge B1b), connecting the 2 subunits; these bridges are implicated in subunit movement. Contacts the tRNAs in the A and P-sites. The protein is Small ribosomal subunit protein uS13 of Malacoplasma penetrans (strain HF-2) (Mycoplasma penetrans).